The chain runs to 135 residues: MYALGTHLLIELKNCNPEILKDLESVKNILVDAAKKANATIISVNFHEFNPFGISGVVVIAESHLTIHTWPEYGFAAVDVFTCGETIKPEIAAQYIIEAFECKVPSIVEMKRGIISHRNEKLPHKVCHEELQVVY.

Ser63 serves as the catalytic Schiff-base intermediate with substrate; via pyruvic acid. The residue at position 63 (Ser63) is a Pyruvic acid (Ser); by autocatalysis. The active-site Proton acceptor; for processing activity is His68. Cys83 acts as the Proton donor; for catalytic activity in catalysis.

It belongs to the prokaryotic AdoMetDC family. Type 1 subfamily. Heterotetramer of two alpha and two beta chains arranged as a dimer of alpha/beta heterodimers. Requires pyruvate as cofactor. In terms of processing, is synthesized initially as an inactive proenzyme. Formation of the active enzyme involves a self-maturation process in which the active site pyruvoyl group is generated from an internal serine residue via an autocatalytic post-translational modification. Two non-identical subunits are generated from the proenzyme in this reaction, and the pyruvate is formed at the N-terminus of the alpha chain, which is derived from the carboxyl end of the proenzyme. The post-translation cleavage follows an unusual pathway, termed non-hydrolytic serinolysis, in which the side chain hydroxyl group of the serine supplies its oxygen atom to form the C-terminus of the beta chain, while the remainder of the serine residue undergoes an oxidative deamination to produce ammonia and the pyruvoyl group blocking the N-terminus of the alpha chain.

The catalysed reaction is S-adenosyl-L-methionine + H(+) = S-adenosyl 3-(methylsulfanyl)propylamine + CO2. Its pathway is amine and polyamine biosynthesis; S-adenosylmethioninamine biosynthesis; S-adenosylmethioninamine from S-adenosyl-L-methionine: step 1/1. Functionally, catalyzes the decarboxylation of S-adenosylmethionine to S-adenosylmethioninamine (dcAdoMet), the propylamine donor required for the synthesis of the polyamines spermine and spermidine from the diamine putrescine. This chain is S-adenosylmethionine decarboxylase proenzyme, found in Thermodesulfovibrio yellowstonii (strain ATCC 51303 / DSM 11347 / YP87).